The primary structure comprises 503 residues: MKIKTDEITSVLKQEILNYKKDLGVDEVGTVLEIGDGIARVYGLKNVMSGEMVEFQNGIFGQAFNLEDNSVGVVVYGDYLAIQEGFTVKRTSRILEVPVGPELLGRVVNPLGEPLDGKGPINAKLTRPVESPAPGIAMRQPVGEPMQTGIKAIDAMIPIGRGQRELIIGDRGTGKTSIALDTIINQKGTGVICVYVAIGQKASTVASTVEMLRNKGALEYTIVVSATAAEPAPLQYIAPYSGCSMAEYFMYNEKKATLVVYDDLSKQAVAYRQMSLLLRRPPGREAYPGDVFYLHSRLLERAAKLDDKYGAGSLTALPIIETQEGEVSAYIPTNVISITDGQIYLQSNLFASGNRPAVDVGISVSRVGSAAQIKAMKQVAGKMKLELAQFRDLEAFAQLGTELDPATQAQLDRGNRIVQMLKQPVSSPFPVEEQVVEIFAVTRGFMDKIPVPKVQQYGKFLLTRIKEQHSEVLEAIRKEKKISDEEKLGEVLSAIAEEFLRKH.

An ATP-binding site is contributed by 169-176 (GDRGTGKT).

Belongs to the ATPase alpha/beta chains family. As to quaternary structure, F-type ATPases have 2 components, CF(1) - the catalytic core - and CF(0) - the membrane proton channel. CF(1) has five subunits: alpha(3), beta(3), gamma(1), delta(1), epsilon(1). CF(0) has three main subunits: a(1), b(2) and c(9-12). The alpha and beta chains form an alternating ring which encloses part of the gamma chain. CF(1) is attached to CF(0) by a central stalk formed by the gamma and epsilon chains, while a peripheral stalk is formed by the delta and b chains.

It is found in the cell inner membrane. The enzyme catalyses ATP + H2O + 4 H(+)(in) = ADP + phosphate + 5 H(+)(out). Produces ATP from ADP in the presence of a proton gradient across the membrane. The alpha chain is a regulatory subunit. The sequence is that of ATP synthase subunit alpha from Leptospira borgpetersenii serovar Hardjo-bovis (strain L550).